The primary structure comprises 271 residues: Octanoyltransferase LipM (271 aa).

The region spanning 31-242 is the BPL/LPL catalytic domain; the sequence is GHNKPTLRFY…GLAEQFNVEF (212 aa). Cys-144 (acyl-thioester intermediate) is an active-site residue.

It belongs to the octanoyltransferase LipM family. Monomer.

It carries out the reaction octanoyl-[ACP] + L-lysyl-[protein] = N(6)-octanoyl-L-lysyl-[protein] + holo-[ACP] + H(+). It participates in protein modification; protein lipoylation via endogenous pathway; protein N(6)-(lipoyl)lysine from octanoyl-[acyl-carrier-protein]. Its function is as follows. Catalyzes the transfer of endogenously produced octanoic acid from octanoyl-acyl-carrier-protein onto the lipoyl domain of GcvH, an intermediate carrier during protein lipoylation. The polypeptide is Octanoyltransferase LipM (Clostridioides difficile (strain 630) (Peptoclostridium difficile)).